Reading from the N-terminus, the 131-residue chain is Ribosome-binding factor A (131 aa).

Belongs to the RbfA family. Monomer. Binds 30S ribosomal subunits, but not 50S ribosomal subunits or 70S ribosomes.

The protein localises to the cytoplasm. Functionally, one of several proteins that assist in the late maturation steps of the functional core of the 30S ribosomal subunit. Associates with free 30S ribosomal subunits (but not with 30S subunits that are part of 70S ribosomes or polysomes). Required for efficient processing of 16S rRNA. May interact with the 5'-terminal helix region of 16S rRNA. This chain is Ribosome-binding factor A, found in Thermotoga petrophila (strain ATCC BAA-488 / DSM 13995 / JCM 10881 / RKU-1).